The primary structure comprises 367 residues: Nodulation protein NolF (367 aa).

It belongs to the membrane fusion protein (MFP) (TC 8.A.1) family.

Functionally, involved in the production of Medicago-specific nodulation signal molecule. The chain is Nodulation protein NolF (nolF) from Rhizobium meliloti (strain 1021) (Ensifer meliloti).